The following is a 144-amino-acid chain: uncharacterized protein (144 aa).

Residues K124 to T133 are compositionally biased toward basic residues. Residues K124–S144 are disordered. Positions K134 to S144 are enriched in basic and acidic residues.

This is an uncharacterized protein from Acidianus filamentous virus 1 (isolate United States/Yellowstone) (AFV-1).